Here is a 435-residue protein sequence, read N- to C-terminus: DMATS-type prenyltransferase fscG (435 aa).

Dimethylallyl diphosphate is bound by residues R111, K193, Y195, R259, K261, Y263, Y352, and Y423.

This sequence belongs to the tryptophan dimethylallyltransferase family.

It functions in the pathway secondary metabolite biosynthesis. DMATS-type prenyltransferase; part of the fragmented gene cluster that mediates the biosynthesis of fusarochromene, a tryptophan-derived metabolite closely related to a group of mycotoxins including fusarochromanone. Within the pathway, fscG catalyzes the prenylation of the primary alcohol produced by fscA which is necessary for the formation of the chromene ring by the oxidoreductase fscI. The first step of the pathway is the epimerization of L-tryptophan to D-tryptophan in the presence of the NRPS-like tryptophan epimerase fscC. D-tryptophan is subsequently hydroxylated by the tryptophan 6-hydroxylase fscE to yield 6-hydroxytryptophan. The pyrrole ring undergoes cleavaged by the tryptophan 2,3-dioxygenase fscD and is finally converted to 4-hydroxykyrunenine by the hydrolase fscH. The NRPS-like oxidoreductase fscA reduces the carboxyl group to primary alcohol and the DMATS-type prenyltransferase fscG performs prenylation, followed by the formation of a chromene ring catalyzed by the oxidoreductase fscI, which leads to desacetylfusarochromene. Epoxidation by fscF and rearrangement reactions of chromene double bonds convert compound desacetylfusarochromene to fusarochromanones. Although specific acetyltransferases were not found near the fsc gene cluster, several predicted enzymes containing the N-acetyltransferase superfamily domain are present in the genome of F.equiseti. These predicted enzymes may have the potential to convert desacetylfusarochromene to fusarochromene. This Fusarium equiseti (Fusarium scirpi) protein is DMATS-type prenyltransferase fscG.